A 372-amino-acid chain; its full sequence is Dual-specificity RNA methyltransferase RlmN (372 aa).

Catalysis depends on Glu92, which acts as the Proton acceptor. The Radical SAM core domain occupies 98–337 (ETDRATLCVS…VILRKTRGDD (240 aa)). Cys105 and Cys342 are oxidised to a cystine. The [4Fe-4S] cluster site is built by Cys112, Cys116, and Cys119. Residues 166–167 (GE), Ser198, 220–222 (SLH), and Asn299 contribute to the S-adenosyl-L-methionine site. The active-site S-methylcysteine intermediate is the Cys342.

The protein belongs to the radical SAM superfamily. RlmN family. The cofactor is [4Fe-4S] cluster.

It is found in the cytoplasm. The catalysed reaction is adenosine(2503) in 23S rRNA + 2 reduced [2Fe-2S]-[ferredoxin] + 2 S-adenosyl-L-methionine = 2-methyladenosine(2503) in 23S rRNA + 5'-deoxyadenosine + L-methionine + 2 oxidized [2Fe-2S]-[ferredoxin] + S-adenosyl-L-homocysteine. It catalyses the reaction adenosine(37) in tRNA + 2 reduced [2Fe-2S]-[ferredoxin] + 2 S-adenosyl-L-methionine = 2-methyladenosine(37) in tRNA + 5'-deoxyadenosine + L-methionine + 2 oxidized [2Fe-2S]-[ferredoxin] + S-adenosyl-L-homocysteine. Specifically methylates position 2 of adenine 2503 in 23S rRNA and position 2 of adenine 37 in tRNAs. m2A2503 modification seems to play a crucial role in the proofreading step occurring at the peptidyl transferase center and thus would serve to optimize ribosomal fidelity. This chain is Dual-specificity RNA methyltransferase RlmN, found in Histophilus somni (strain 129Pt) (Haemophilus somnus).